Reading from the N-terminus, the 238-residue chain is Ribonuclease PH (238 aa).

Residues Arg-86 and Gly-124 to Arg-126 each bind phosphate.

This sequence belongs to the RNase PH family. In terms of assembly, homohexameric ring arranged as a trimer of dimers.

It catalyses the reaction tRNA(n+1) + phosphate = tRNA(n) + a ribonucleoside 5'-diphosphate. Its function is as follows. Phosphorolytic 3'-5' exoribonuclease that plays an important role in tRNA 3'-end maturation. Removes nucleotide residues following the 3'-CCA terminus of tRNAs; can also add nucleotides to the ends of RNA molecules by using nucleoside diphosphates as substrates, but this may not be physiologically important. Probably plays a role in initiation of 16S rRNA degradation (leading to ribosome degradation) during starvation. This is Ribonuclease PH from Escherichia coli O6:K15:H31 (strain 536 / UPEC).